Consider the following 461-residue polypeptide: Photosystem II CP43 reaction center protein (461 aa).

A propeptide spanning residues 1–2 (ME) is cleaved from the precursor. Thr3 bears the N-acetylthreonine mark. Position 3 is a phosphothreonine (Thr3). The next 5 membrane-spanning stretches (helical) occupy residues 57 to 81 (LFEV…PHIA), 122 to 143 (LIGP…KDKN), 166 to 188 (KAMY…RVIT), 243 to 263 (TPWP…LSYS), and 279 to 300 (WFNN…ASQS). Glu355 lines the [CaMn4O5] cluster pocket. Residues 435–459 (RARAAAAGFEKGIDRFDEPVLSMRP) form a helical membrane-spanning segment.

This sequence belongs to the PsbB/PsbC family. PsbC subfamily. In terms of assembly, PSII is composed of 1 copy each of membrane proteins PsbA, PsbB, PsbC, PsbD, PsbE, PsbF, PsbH, PsbI, PsbJ, PsbK, PsbL, PsbM, PsbT, PsbX, PsbY, PsbZ, Psb30/Ycf12, at least 3 peripheral proteins of the oxygen-evolving complex and a large number of cofactors. It forms dimeric complexes. The cofactor is Binds multiple chlorophylls and provides some of the ligands for the Ca-4Mn-5O cluster of the oxygen-evolving complex. It may also provide a ligand for a Cl- that is required for oxygen evolution. PSII binds additional chlorophylls, carotenoids and specific lipids.. In terms of processing, phosphorylated in vitro.

The protein localises to the plastid. The protein resides in the chloroplast thylakoid membrane. One of the components of the core complex of photosystem II (PSII). It binds chlorophyll and helps catalyze the primary light-induced photochemical processes of PSII. PSII is a light-driven water:plastoquinone oxidoreductase, using light energy to abstract electrons from H(2)O, generating O(2) and a proton gradient subsequently used for ATP formation. In Chlamydomonas reinhardtii (Chlamydomonas smithii), this protein is Photosystem II CP43 reaction center protein.